We begin with the raw amino-acid sequence, 132 residues long: uncharacterized protein (132 aa).

The next 2 helical transmembrane spans lie at 44-64 (FMSF…FTFI) and 75-95 (IAMI…AMLF).

It is found in the cytoplasm. It localises to the membrane. This is an uncharacterized protein from Schizosaccharomyces pombe (strain 972 / ATCC 24843) (Fission yeast).